Reading from the N-terminus, the 203-residue chain is 3-isopropylmalate dehydratase small subunit (203 aa).

It belongs to the LeuD family. LeuD type 1 subfamily. Heterodimer of LeuC and LeuD.

It catalyses the reaction (2R,3S)-3-isopropylmalate = (2S)-2-isopropylmalate. It functions in the pathway amino-acid biosynthesis; L-leucine biosynthesis; L-leucine from 3-methyl-2-oxobutanoate: step 2/4. Catalyzes the isomerization between 2-isopropylmalate and 3-isopropylmalate, via the formation of 2-isopropylmaleate. The sequence is that of 3-isopropylmalate dehydratase small subunit from Phenylobacterium zucineum (strain HLK1).